A 342-amino-acid polypeptide reads, in one-letter code: tRNA dimethylallyltransferase (342 aa).

39–46 (GPTGSGKT) contributes to the ATP binding site. 41–46 (TGSGKT) is a substrate binding site. An interaction with substrate tRNA region spans residues 64–67 (DSMQ).

It belongs to the IPP transferase family. Monomer. It depends on Mg(2+) as a cofactor.

It catalyses the reaction adenosine(37) in tRNA + dimethylallyl diphosphate = N(6)-dimethylallyladenosine(37) in tRNA + diphosphate. Its function is as follows. Catalyzes the transfer of a dimethylallyl group onto the adenine at position 37 in tRNAs that read codons beginning with uridine, leading to the formation of N6-(dimethylallyl)adenosine (i(6)A). In Chlamydia pneumoniae (Chlamydophila pneumoniae), this protein is tRNA dimethylallyltransferase.